We begin with the raw amino-acid sequence, 273 residues long: Spore development regulator vosA (273 aa).

Positions 66-75 (STTQELQSTQ) are enriched in low complexity. The segment at 66-86 (STTQELQSTQPIAVRQQPRAA) is disordered. One can recognise a Velvet domain in the interval 70–253 (ELQSTQPIAV…KEQGCIISIK (184 aa)). The short motif at 211-218 (FPTLTEIK) is the Nuclear localization signal element. Residues 254-267 (KGNERARPRGADGR) show a composition bias toward basic and acidic residues. A disordered region spans residues 254–273 (KGNERARPRGADGRSDDEDD).

It belongs to the velvet family. VosA subfamily. As to quaternary structure, forms a heterodimeric complex with velB; the formation of the velB-vosA complex is light-dependent.

It is found in the nucleus. Its function is as follows. Component of the velB-vosA heterodimeric complex that plays a dual role in activating genes associated with spore maturation and repressing certain development-associated genes. The complex binds DNA through the DNA-binding domain of vosA that recognizes an 11-nucleotide consensus sequence 5'-CTGGCCGCGGC-3' consisting of two motifs in the promoters of key developmental regulatory genes. Positively regulates the expression of wetA and represses abaA and brlA. Acts as a crucial regulator of both conidiation capacity and conidial quality. Responsible for the synthesis and accumulation of intracellular trehalose. This chain is Spore development regulator vosA, found in Beauveria bassiana (strain ARSEF 2860) (White muscardine disease fungus).